Here is a 213-residue protein sequence, read N- to C-terminus: Nucleolar protein 12 (213 aa).

The stretch at 32 to 95 (GFHKRKVERK…RLVTAKTESV (64 aa)) forms a coiled coil. The disordered stretch occupies residues 117 to 213 (ARLLGLPTPE…LTGKARHSGE (97 aa)). Basic residues-rich tracts occupy residues 169–181 (AHSRKKVKKKRLR) and 197–213 (SKTRRRRLTGKARHSGE).

The protein belongs to the RRP17 family. Interacts with KIAA1191.

It localises to the nucleus. The protein localises to the nucleolus. The protein resides in the cytoplasm. Multifunctional RNA binding protein that plays a role in RNA metabolism and DNA maintenance. Participates in the resolution of DNA stress and the maintenance of genome integrity by localizing to sites of DNA insults. Also plays a role in proper nucleolar organization by limiting nucleolar size and regulating nucleolar number. Mechanistically, regulates the nucleolar levels of fibrillarin and nucleolin, two key players in pre-rRNA processing and ribosome assembly. The polypeptide is Nucleolar protein 12 (NOL12) (Bos taurus (Bovine)).